A 198-amino-acid chain; its full sequence is MESNNNNLNLDMEKDQETTFDYSKRAQWLRAAVLGANDGLVSTASLMMGIGAVKQDVRIMLLTGFAGLVAGACSMAIGEFISVYSQYDIEVAQMKRESGGETKKEKLPSPTQAAIASALAFTLGAIVPLLAAAFVKEYKVRIGVIVAAVTLALVMFGWLGAVLGKAPVVKSLVRVLIGGWLAMAITFGFTKLVGSHGL.

At 1-32 the chain is on the cytoplasmic side; the sequence is MESNNNNLNLDMEKDQETTFDYSKRAQWLRAA. A helical membrane pass occupies residues 33-53; the sequence is VLGANDGLVSTASLMMGIGAV. Over 54 to 60 the chain is Vacuolar; it reads KQDVRIM. A helical transmembrane segment spans residues 61 to 81; sequence LLTGFAGLVAGACSMAIGEFI. Residues 82–114 lie on the Cytoplasmic side of the membrane; that stretch reads SVYSQYDIEVAQMKRESGGETKKEKLPSPTQAA. Residues 115-135 form a helical membrane-spanning segment; it reads IASALAFTLGAIVPLLAAAFV. Topologically, residues 136 to 141 are vacuolar; it reads KEYKVR. Residues 142–162 traverse the membrane as a helical segment; sequence IGVIVAAVTLALVMFGWLGAV. At 163 to 174 the chain is on the cytoplasmic side; the sequence is LGKAPVVKSLVR. Residues 175–195 form a helical membrane-spanning segment; it reads VLIGGWLAMAITFGFTKLVGS. Topologically, residues 196–198 are vacuolar; it reads HGL.

The protein belongs to the CCC1 family.

The protein localises to the vacuole membrane. It carries out the reaction Fe(2+)(in) = Fe(2+)(out). Functionally, probable vacuolar iron transporter that may be involved in the regulation of iron distribution throughout the plant. The polypeptide is Vacuolar iron transporter homolog 4 (Arabidopsis thaliana (Mouse-ear cress)).